Consider the following 210-residue polypeptide: 3 beta-hydroxysteroid dehydrogenase/Delta 5--&gt;4-isomerase (210 aa).

Y29 serves as the catalytic Proton acceptor. Residue K33 participates in NAD(+) binding.

It belongs to the 3-beta-HSD family.

The catalysed reaction is a 3beta-hydroxy-Delta(5)-steroid + NAD(+) = a 3-oxo-Delta(5)-steroid + NADH + H(+). It carries out the reaction a 3-oxo-Delta(5)-steroid = a 3-oxo-Delta(4)-steroid. It participates in lipid metabolism; steroid biosynthesis. Catalyzes the oxidative conversion of Delta(5)-ene-3-beta-hydroxy steroid, and the oxidative conversion of ketosteroids. The 3-beta-HSD enzymatic system plays a crucial role in the biosynthesis of all classes of hormonal steroids. During viral infection, steroid production contributes to virulence by inhibiting the host inflammatory response. The chain is 3 beta-hydroxysteroid dehydrogenase/Delta 5--&gt;4-isomerase (OPG174) from Variola virus (isolate Human/India/Ind3/1967) (VARV).